Reading from the N-terminus, the 215-residue chain is Probable transaldolase 1 (215 aa).

The active-site Schiff-base intermediate with substrate is the lysine 83.

This sequence belongs to the transaldolase family. Type 3B subfamily.

It is found in the cytoplasm. The enzyme catalyses D-sedoheptulose 7-phosphate + D-glyceraldehyde 3-phosphate = D-erythrose 4-phosphate + beta-D-fructose 6-phosphate. It participates in carbohydrate degradation; pentose phosphate pathway; D-glyceraldehyde 3-phosphate and beta-D-fructose 6-phosphate from D-ribose 5-phosphate and D-xylulose 5-phosphate (non-oxidative stage): step 2/3. Functionally, transaldolase is important for the balance of metabolites in the pentose-phosphate pathway. In Bacillus cereus (strain ATCC 14579 / DSM 31 / CCUG 7414 / JCM 2152 / NBRC 15305 / NCIMB 9373 / NCTC 2599 / NRRL B-3711), this protein is Probable transaldolase 1.